The chain runs to 90 residues: Probable Fe(2+)-trafficking protein (90 aa).

Belongs to the Fe(2+)-trafficking protein family.

In terms of biological role, could be a mediator in iron transactions between iron acquisition and iron-requiring processes, such as synthesis and/or repair of Fe-S clusters in biosynthetic enzymes. This Chromobacterium violaceum (strain ATCC 12472 / DSM 30191 / JCM 1249 / CCUG 213 / NBRC 12614 / NCIMB 9131 / NCTC 9757 / MK) protein is Probable Fe(2+)-trafficking protein.